The primary structure comprises 401 residues: 8-amino-7-oxononanoate synthase (401 aa).

R24 contributes to the substrate binding site. Residue 111-112 coordinates pyridoxal 5'-phosphate; that stretch reads GF. Position 137 (H137) interacts with substrate. Pyridoxal 5'-phosphate-binding residues include S183, H211, and T240. K243 is subject to N6-(pyridoxal phosphate)lysine. A substrate-binding site is contributed by T357.

It belongs to the class-II pyridoxal-phosphate-dependent aminotransferase family. BioF subfamily. Homodimer. It depends on pyridoxal 5'-phosphate as a cofactor.

It catalyses the reaction 6-carboxyhexanoyl-[ACP] + L-alanine + H(+) = (8S)-8-amino-7-oxononanoate + holo-[ACP] + CO2. Its pathway is cofactor biosynthesis; biotin biosynthesis. Catalyzes the decarboxylative condensation of pimeloyl-[acyl-carrier protein] and L-alanine to produce 8-amino-7-oxononanoate (AON), [acyl-carrier protein], and carbon dioxide. This chain is 8-amino-7-oxononanoate synthase, found in Xanthomonas axonopodis pv. citri (strain 306).